Reading from the N-terminus, the 306-residue chain is Follistatin-related protein 1 (306 aa).

Positions 1-18 are cleaved as a signal peptide; the sequence is MWKRWLALALVTIALVHG. A Follistatin-like domain is found at 28–51; sequence ICANVFCGAGRECAVTEKGEPTCL. 5 disulfides stabilise this stretch: C29-C40, C34-C50, C52-C82, C56-C75, and C64-C96. In terms of domain architecture, Kazal-like spans 46–98; sequence GEPTCLCIEQCKPHKRPVCGSNGKTYLNHCELHRDACLTGSKIQVDYDGHCKE. Residue N142 is glycosylated (N-linked (GlcNAc...) asparagine). Positions 142-176 constitute an EF-hand 1 domain; the sequence is NYSEILDKYFKSFDNGDSHLDSSEFLKFVEQNETA. S163 is subject to Phosphoserine. N-linked (GlcNAc...) asparagine glycosylation is found at N173 and N178. Residues 191–226 form the EF-hand 2 domain; that stretch reads LRGLCVDALIELSDENADWKLSFQEFLKCLNPSFNP. In terms of domain architecture, VWFC spans 231–285; that stretch reads CALEDETYADGAETEVDCNRCVCSCGHWVCTAMTCDGKNQKGVQTHTEEEMTRYA.

As to quaternary structure, homodimer. Interacts with SCN10A. Interacts with DIP2A; DIP2A may act as a cell surface receptor for FSTL1. Interacts with BMP4. Interacts with CD14; this interaction promotes TL4-mediated signaling cascade.

It is found in the secreted. In terms of biological role, secreted glycoprotein that is involved in various physiological processes, such as angiogenesis, regulation of the immune response, cell proliferation and differentiation. Plays a role in the development of the central nervous system, skeletal system, lungs, and ureter. Promotes endothelial cell survival, migration and differentiation into network structures in an AKT-dependent manner. Also promotes survival of cardiac myocytes. Initiates various signaling cascades by activating different receptors on the cell surface such as DIP2A, TLR4 or BMP receptors. In Rattus norvegicus (Rat), this protein is Follistatin-related protein 1 (Fstl1).